A 172-amino-acid chain; its full sequence is Biogenesis of lysosome-related organelles complex 1 subunit 6 (172 aa).

The segment covering 1 to 10 (MSVPEPPPPD) has biased composition (pro residues). Disordered regions lie at residues 1–37 (MSVP…PDEG) and 141–172 (QKRQ…AKRT). Residues 63–167 (DLQRSKRALQ…FEREKQLTAK (105 aa)) are a coiled coil. A compositionally biased stretch (basic and acidic residues) spans 143–164 (RQREELEREQQREKEFEREKQL).

Belongs to the BLOC1S6 family. In terms of assembly, octamer composed of one copy each BLOC1S1, BLOC1S2, BLOC1S3, BLOC1S4, BLOC1S5, BLOC1S6, DTNBP1/BLOC1S7 and SNAPIN/BLOC1S8. Interacts with SNAP47. Homodimer. Component of the biogenesis of lysosome-related organelles complex 1 (BLOC-1) composed of BLOC1S1, BLOC1S2, BLOC1S3, BLOC1S4, BLOC1S5, BLOC1S6, DTNBP1/BLOC1S7 and SNAPIN/BLOC1S8. Interacts with BLOC1S4, BLOC1S5, DTNBP1/BLOC1S7, F-actin, SNAP25 isoform 1 and STX12. Phosphorylated. In terms of tissue distribution, expressed in liver, kidney and spleen (at protein level). Ubiquitously expressed, with the highest expression levels observed in brain, heart, liver and kidney.

Its subcellular location is the cytoplasm. It is found in the membrane. Component of the BLOC-1 complex, a complex that is required for normal biogenesis of lysosome-related organelles (LRO), such as platelet dense granules and melanosomes. In concert with the AP-3 complex, the BLOC-1 complex is required to target membrane protein cargos into vesicles assembled at cell bodies for delivery into neurites and nerve terminals. The BLOC-1 complex, in association with SNARE proteins, is also proposed to be involved in neurite extension. May play a role in intracellular vesicle trafficking, particularly in the vesicle-docking and fusion process. This is Biogenesis of lysosome-related organelles complex 1 subunit 6 (Bloc1s6) from Mus musculus (Mouse).